The following is a 211-amino-acid chain: Glycerol-3-phosphate acyltransferase (211 aa).

5 helical membrane passes run 5–25 (VILGLLALISYLLGSIPTGYL), 55–75 (GPGLVTFLVDVGKGLGAILVA), 85–105 (PVPAGWFEFVLLAIAFIAVLA), 126–146 (VLLALNAPTALATFGVFLVVL), and 168–188 (WFFTQSWPFVGFSVIAGAFVI).

This sequence belongs to the PlsY family. Probably interacts with PlsX.

The protein resides in the cell inner membrane. The catalysed reaction is an acyl phosphate + sn-glycerol 3-phosphate = a 1-acyl-sn-glycero-3-phosphate + phosphate. The protein operates within lipid metabolism; phospholipid metabolism. Catalyzes the transfer of an acyl group from acyl-phosphate (acyl-PO(4)) to glycerol-3-phosphate (G3P) to form lysophosphatidic acid (LPA). This enzyme utilizes acyl-phosphate as fatty acyl donor, but not acyl-CoA or acyl-ACP. This Thermosynechococcus vestitus (strain NIES-2133 / IAM M-273 / BP-1) protein is Glycerol-3-phosphate acyltransferase.